The chain runs to 25 residues: Flagellar filament core protein flaB1 (25 aa).

The protein belongs to the bacterial flagellin family. The flagellum consists of an outer layer composed of two sheath proteins, flaA1 (44 kDa) and flaA2 (35 kDa) around a core that contains three proteins flaB1 (37 kDa), flaB2 (34 kDa) and flaB3 (32 kDa).

It localises to the periplasmic flagellum. It is found in the periplasm. Its function is as follows. Component of the core of the flagella. This chain is Flagellar filament core protein flaB1 (flaB1), found in Brachyspira hyodysenteriae (Treponema hyodysenteriae).